The chain runs to 209 residues: uncharacterized protein (209 aa).

Catalysis depends on charge relay system residues serine 119 and histidine 160.

Belongs to the peptidase S51 family.

This is an uncharacterized protein from Listeria innocua serovar 6a (strain ATCC BAA-680 / CLIP 11262).